Consider the following 87-residue polypeptide: MANTAQAKKRVRQNIKQRERNSGLRSRLRTAIKSVRKAIVAGDKNLAETVFRKSVSIIDSIASKGIIHKNKASRHKSRLSGAVKAMG.

The disordered stretch occupies residues 1 to 26 (MANTAQAKKRVRQNIKQRERNSGLRS).

It belongs to the bacterial ribosomal protein bS20 family.

Binds directly to 16S ribosomal RNA. In Nitrosomonas eutropha (strain DSM 101675 / C91 / Nm57), this protein is Small ribosomal subunit protein bS20.